Consider the following 317-residue polypeptide: Transaldolase (317 aa).

Lys126 (schiff-base intermediate with substrate) is an active-site residue.

This sequence belongs to the transaldolase family. Type 1 subfamily. Homodimer.

It is found in the cytoplasm. It carries out the reaction D-sedoheptulose 7-phosphate + D-glyceraldehyde 3-phosphate = D-erythrose 4-phosphate + beta-D-fructose 6-phosphate. The protein operates within carbohydrate degradation; pentose phosphate pathway; D-glyceraldehyde 3-phosphate and beta-D-fructose 6-phosphate from D-ribose 5-phosphate and D-xylulose 5-phosphate (non-oxidative stage): step 2/3. Transaldolase is important for the balance of metabolites in the pentose-phosphate pathway. This is Transaldolase from Burkholderia orbicola (strain AU 1054).